The following is a 437-amino-acid chain: Amino-acid acetyltransferase (437 aa).

The N-acetyltransferase domain occupies 289 to 429 (ENIRLATSFD…EHYNYQRMSK (141 aa)).

It belongs to the acetyltransferase family. ArgA subfamily.

It localises to the cytoplasm. The catalysed reaction is L-glutamate + acetyl-CoA = N-acetyl-L-glutamate + CoA + H(+). The protein operates within amino-acid biosynthesis; L-arginine biosynthesis; N(2)-acetyl-L-ornithine from L-glutamate: step 1/4. This is Amino-acid acetyltransferase from Actinobacillus pleuropneumoniae serotype 5b (strain L20).